We begin with the raw amino-acid sequence, 130 residues long: Small ribosomal subunit protein uS9 (130 aa).

This sequence belongs to the universal ribosomal protein uS9 family.

The sequence is that of Small ribosomal subunit protein uS9 from Bordetella parapertussis (strain 12822 / ATCC BAA-587 / NCTC 13253).